A 150-amino-acid chain; its full sequence is Ribonuclease HI (150 aa).

The RNase H type-1 domain maps to Met-1–Met-141. Mg(2+) is bound by residues Asp-9, Glu-47, Asp-69, and Asp-133.

The protein belongs to the RNase H family. Monomer. Mg(2+) is required as a cofactor.

Its subcellular location is the cytoplasm. It carries out the reaction Endonucleolytic cleavage to 5'-phosphomonoester.. Its function is as follows. Endonuclease that specifically degrades the RNA of RNA-DNA hybrids. In Xylella fastidiosa (strain Temecula1 / ATCC 700964), this protein is Ribonuclease HI.